We begin with the raw amino-acid sequence, 204 residues long: Large ribosomal subunit protein eL15 (204 aa).

It belongs to the eukaryotic ribosomal protein eL15 family. As to quaternary structure, component of the large ribosomal subunit.

It is found in the cytoplasm. Functionally, component of the large ribosomal subunit. The ribosome is a large ribonucleoprotein complex responsible for the synthesis of proteins in the cell. This chain is Large ribosomal subunit protein eL15 (rpl15), found in Megalobrama amblycephala (Chinese blunt snout bream).